The following is a 1398-amino-acid chain: Pyrolysin (1398 aa).

A signal peptide spans 1 to 26 (MNKKGLTVLFIAIMLLSVVPVHFVSA). A propeptide spanning residues 27–149 (GTPPVSSENS…KTKEPSLEPK (123 aa)) is cleaved from the precursor. A glycan (N-linked (GlcNAc...) asparagine) is linked at Asn-152. One can recognise a Peptidase S8 domain in the interval 154–656 (TWVINALQFI…HGLVNVTKSW (503 aa)). The active-site Charge relay system is the Asp-179. N-linked (GlcNAc...) asparagine glycans are attached at residues Asn-222, Asn-228, Asn-240, Asn-257, Asn-262, Asn-298, and Asn-327. The active-site Charge relay system is His-365. Asn-406 is a glycosylation site (N-linked (GlcNAc...) asparagine). The active-site Charge relay system is Ser-590. Asn-651, Asn-663, Asn-739, Asn-792, Asn-893, Asn-908, Asn-917, Asn-929, Asn-1048, Asn-1056, Asn-1084, Asn-1117, Asn-1133, Asn-1140, Asn-1148, Asn-1208, Asn-1233, Asn-1237, and Asn-1332 each carry an N-linked (GlcNAc...) asparagine glycan.

It belongs to the peptidase S8 family. In terms of processing, LWM pyrolysin seems to be produced by autoproteolytic activation of HMW pyrolysin. Glycosylated.

Its subcellular location is the cell envelope. Functionally, has endopeptidase activity toward caseins, casein fragments including alpha-S1-casein and synthetic peptides. This Pyrococcus furiosus (strain ATCC 43587 / DSM 3638 / JCM 8422 / Vc1) protein is Pyrolysin (pls).